Consider the following 260-residue polypeptide: Small ribosomal subunit protein uS2 (260 aa).

Belongs to the universal ribosomal protein uS2 family.

This is Small ribosomal subunit protein uS2 from Staphylococcus carnosus (strain TM300).